The sequence spans 192 residues: uncharacterized protein (192 aa).

One can recognise a Nudix hydrolase domain in the interval 29–160; the sequence is QRQAAVLIPV…PLDVYRRGNS (132 aa). A Nudix box motif is present at residues 67 to 89; it reads GAVDSTDASLIAAALREAQEEVA. Positions 83 and 87 each coordinate Mg(2+).

It belongs to the Nudix hydrolase family. PCD1 subfamily. Mn(2+) serves as cofactor. Requires Mg(2+) as cofactor.

Probably mediates the hydrolysis of some nucleoside diphosphate derivatives. This is an uncharacterized protein from Salmonella newport (strain SL254).